A 500-amino-acid chain; its full sequence is MYTFIYFKNPKHFNLSQPSRCTAQPFISTRNRPLSCPIPTVQPIYVTHGIILPILKGTLISQRGVNIVPFVSKRDSSYYTDKDKVVSITYEEIGLFPRSFSRVLDRFLKQLFSDVDNLVIQEYRFYRYLFLTTIKTIFILFFVPFLVNFAAKNYIVKPITEYFWNTSHPEIFLNSYEQKRAFVELAKFEEKIYFETLVESHSHHQTHRDSKPLRENGIYFPDGEFLDNANLLSTPRSINSNTFLKQNIDISLREEKPLTLVQGVNLLEEKKELNIPLAQENIAYNNQSIPQTSFGQGNFSSLFTGDREGEETAKQNLLSQRVIGANLRQIYLPSAEGEMLPSIRGSLDSIKNKDISKIYQEKTIELATYYNNHSIEAITNFFADLLSLFTLLYLLITLEIQINITKSFLLEVFFGLDDSKKSLLILLITDLLVGYHSSNLWELFFEFIFNHYGIPESQTGIFLLVATLPVLLDVLFKYLIFRHLNRSSPATVATYQAIIE.

A helical transmembrane segment spans residues 129–149; sequence LFLTTIKTIFILFFVPFLVNF. The tract at residues 204 to 354 is insert; sequence HQTHRDSKPL…GSLDSIKNKD (151 aa). 3 consecutive transmembrane segments (helical) span residues 378-398, 425-445, and 461-481; these read ITNFFADLLSLFTLLYLLITL, ILLITDLLVGYHSSNLWELFF, and IFLLVATLPVLLDVLFKYLIF.

This sequence belongs to the CemA family.

Its subcellular location is the plastid. The protein resides in the chloroplast inner membrane. The enzyme catalyses K(+)(in) + H(+)(out) = K(+)(out) + H(+)(in). Contributes to K(+)/H(+) antiport activity by supporting proton efflux to control proton extrusion and homeostasis in chloroplasts in a light-dependent manner to modulate photosynthesis. Prevents excessive induction of non-photochemical quenching (NPQ) under continuous-light conditions. Indirectly promotes efficient inorganic carbon uptake into chloroplasts. The chain is Potassium/proton antiporter CemA from Chlamydomonas reinhardtii (Chlamydomonas smithii).